The primary structure comprises 249 residues: Metallo-beta-lactamase type 2 (249 aa).

The N-terminal stretch at 1-18 (MKTVFILISMLFPVAVMA) is a signal peptide. Zn(2+) is bound by residues His99, His101, Asp103, His162, and Cys181. Substrate-binding residues include Lys184 and Asn193. Residue His223 participates in Zn(2+) binding.

It belongs to the metallo-beta-lactamase superfamily. Class-B beta-lactamase family. In terms of assembly, monomer. It depends on Zn(2+) as a cofactor.

It localises to the periplasm. It carries out the reaction a beta-lactam + H2O = a substituted beta-amino acid. With respect to regulation, competitively inhibited by 4-morpholineethanesulfonic acid (MES), SB236050 and biphenyl tetrazoles (BPTs). Also inhibited by chelating agents such as EDTA and 1,10-phenanthroline. CcrA is not susceptible to inactivation by the beta-lactamase-blocking agents clavulanic acid or tazobactam. Its function is as follows. Confers resistance to the different beta-lactams antibiotics (penicillin, cephalosporin and carbapenem) via the hydrolysis of the beta-lactam ring. The chain is Metallo-beta-lactamase type 2 from Bacteroides fragilis.